A 510-amino-acid polypeptide reads, in one-letter code: Bifunctional purine biosynthesis protein PurH (510 aa).

The MGS-like domain occupies 1–144; it reads MSKRALISVT…KNYKDVIVVV (144 aa).

The protein belongs to the PurH family.

The enzyme catalyses (6R)-10-formyltetrahydrofolate + 5-amino-1-(5-phospho-beta-D-ribosyl)imidazole-4-carboxamide = 5-formamido-1-(5-phospho-D-ribosyl)imidazole-4-carboxamide + (6S)-5,6,7,8-tetrahydrofolate. The catalysed reaction is IMP + H2O = 5-formamido-1-(5-phospho-D-ribosyl)imidazole-4-carboxamide. Its pathway is purine metabolism; IMP biosynthesis via de novo pathway; 5-formamido-1-(5-phospho-D-ribosyl)imidazole-4-carboxamide from 5-amino-1-(5-phospho-D-ribosyl)imidazole-4-carboxamide (10-formyl THF route): step 1/1. It functions in the pathway purine metabolism; IMP biosynthesis via de novo pathway; IMP from 5-formamido-1-(5-phospho-D-ribosyl)imidazole-4-carboxamide: step 1/1. In Clostridioides difficile (strain 630) (Peptoclostridium difficile), this protein is Bifunctional purine biosynthesis protein PurH.